We begin with the raw amino-acid sequence, 254 residues long: NAD kinase (254 aa).

Aspartate 44 acts as the Proton acceptor in catalysis. Residues 44-45 (DG), 114-115 (NE), aspartate 144, alanine 152, 155-160 (TAYNYS), and alanine 179 each bind NAD(+).

This sequence belongs to the NAD kinase family. A divalent metal cation serves as cofactor.

Its subcellular location is the cytoplasm. It catalyses the reaction NAD(+) + ATP = ADP + NADP(+) + H(+). Its function is as follows. Involved in the regulation of the intracellular balance of NAD and NADP, and is a key enzyme in the biosynthesis of NADP. Catalyzes specifically the phosphorylation on 2'-hydroxyl of the adenosine moiety of NAD to yield NADP. In Cereibacter sphaeroides (strain ATCC 17029 / ATH 2.4.9) (Rhodobacter sphaeroides), this protein is NAD kinase.